A 490-amino-acid polypeptide reads, in one-letter code: Betaine aldehyde dehydrogenase (490 aa).

K(+) contacts are provided by Thr26, Ile27, and Asp93. Gly150 to Trp152 provides a ligand contact to NAD(+). Residue Lys162 is the Charge relay system of the active site. NAD(+) is bound at residue Lys176 to Glu179. Val180 contacts K(+). Gly230–Thr233 contacts NAD(+). Leu246 provides a ligand contact to K(+). Catalysis depends on Glu252, which acts as the Proton acceptor. Residues Gly254, Cys286, and Glu387 each coordinate NAD(+). The Nucleophile role is filled by Cys286. Cys286 is modified (cysteine sulfenic acid (-SOH)). Residues Lys457 and Gly460 each coordinate K(+). The Charge relay system role is filled by Glu464.

The protein belongs to the aldehyde dehydrogenase family. Dimer of dimers. K(+) is required as a cofactor.

The enzyme catalyses betaine aldehyde + NAD(+) + H2O = glycine betaine + NADH + 2 H(+). The protein operates within amine and polyamine biosynthesis; betaine biosynthesis via choline pathway; betaine from betaine aldehyde: step 1/1. Involved in the biosynthesis of the osmoprotectant glycine betaine. Catalyzes the irreversible oxidation of betaine aldehyde to the corresponding acid. The chain is Betaine aldehyde dehydrogenase from Pseudomonas aeruginosa (strain UCBPP-PA14).